A 147-amino-acid chain; its full sequence is CLAVATA3/ESR (CLE)-related protein 4C (147 aa).

An N-terminal signal peptide occupies residues 1–21; it reads MATNTMLCLFVISVVLALAFA. A required for secretion from the host cytoplasm to the host apoplasm region spans residues 21-83; the sequence is ATNKKGDEEP…SNQLPNNNWM (63 aa). Residue Asn-32 is glycosylated (N-linked (GlcNAc...) asparagine). Disordered stretches follow at residues 57-86 and 116-147; these read GADA…MAPP and RKTG…PIHH. Basic and acidic residues predominate over residues 125 to 137; it reads HHEETTLEQEKRV. The short motif at 136-147 is the CLE element; it reads RVAGAGPDPIHH.

Belongs to the CLV3/ESR signal peptide family. As to expression, highly expressed exclusively within the dorsal esophageal gland cell during syncytium formation in host plants.

The protein resides in the secreted. Its subcellular location is the host cytoplasm. The protein localises to the host extracellular space. It localises to the extracellular space. It is found in the apoplast. Its function is as follows. Mimics host plant CLE extracellular signal peptides that regulate cell fate. May play a role in the differentiation or division of feeding cells (syncytia) induced in plant roots during infection. The polypeptide is CLAVATA3/ESR (CLE)-related protein 4C (CLE-4C) (Globodera rostochiensis (Golden nematode worm)).